The chain runs to 129 residues: Small ribosomal subunit protein uS11 (129 aa).

Belongs to the universal ribosomal protein uS11 family. In terms of assembly, part of the 30S ribosomal subunit. Interacts with proteins S7 and S18. Binds to IF-3.

Its function is as follows. Located on the platform of the 30S subunit, it bridges several disparate RNA helices of the 16S rRNA. Forms part of the Shine-Dalgarno cleft in the 70S ribosome. The protein is Small ribosomal subunit protein uS11 of Bacillus cytotoxicus (strain DSM 22905 / CIP 110041 / 391-98 / NVH 391-98).